Here is a 20-residue protein sequence, read N- to C-terminus: Manganese peroxidase H5 (20 aa).

It belongs to the peroxidase family. Ligninase subfamily.

The protein resides in the secreted. The enzyme catalyses 2 Mn(2+) + H2O2 + 2 H(+) = 2 Mn(3+) + 2 H2O. In terms of biological role, catalyzes the oxidation of Mn(2+) to Mn(3+). The latter, acting as a diffusible redox mediator, is capable of oxidizing a variety of lignin compounds. The polypeptide is Manganese peroxidase H5 (Phanerodontia chrysosporium (White-rot fungus)).